The sequence spans 44 residues: Large ribosomal subunit protein bL34 (44 aa).

It belongs to the bacterial ribosomal protein bL34 family.

In Neorickettsia sennetsu (strain ATCC VR-367 / Miyayama) (Ehrlichia sennetsu), this protein is Large ribosomal subunit protein bL34.